We begin with the raw amino-acid sequence, 165 residues long: UPF0262 protein Sala_0765 (165 aa).

It belongs to the UPF0262 family.

The sequence is that of UPF0262 protein Sala_0765 from Sphingopyxis alaskensis (strain DSM 13593 / LMG 18877 / RB2256) (Sphingomonas alaskensis).